The sequence spans 151 residues: Minor curlin subunit (151 aa).

The N-terminal stretch at 1–21 is a signal peptide; sequence MKNKLLFMMLTILGAPGIATA.

The protein belongs to the CsgA/CsgB family.

The protein resides in the fimbrium. In terms of biological role, curlin is the structural subunit of the curli. Curli are coiled surface structures that assemble preferentially at growth temperatures below 37 degrees Celsius. Curli can bind to fibronectin. The minor subunit is the nucleation component of curlin monomers. The protein is Minor curlin subunit (csgB) of Salmonella typhi.